The primary structure comprises 431 residues: Histidine--tRNA ligase (431 aa).

The protein belongs to the class-II aminoacyl-tRNA synthetase family. In terms of assembly, homodimer.

It is found in the cytoplasm. It carries out the reaction tRNA(His) + L-histidine + ATP = L-histidyl-tRNA(His) + AMP + diphosphate + H(+). This Neisseria meningitidis serogroup C / serotype 2a (strain ATCC 700532 / DSM 15464 / FAM18) protein is Histidine--tRNA ligase.